Consider the following 456-residue polypeptide: UDP-N-acetylglucosamine 1-carboxyvinyltransferase (456 aa).

34–35 contributes to the phosphoenolpyruvate binding site; the sequence is KN. Arginine 104 contributes to the UDP-N-acetyl-alpha-D-glucosamine binding site. Catalysis depends on cysteine 128, which acts as the Proton donor. At cysteine 128 the chain carries 2-(S-cysteinyl)pyruvic acid O-phosphothioketal. UDP-N-acetyl-alpha-D-glucosamine-binding residues include aspartate 319 and isoleucine 341.

This sequence belongs to the EPSP synthase family. MurA subfamily.

The protein localises to the cytoplasm. The enzyme catalyses phosphoenolpyruvate + UDP-N-acetyl-alpha-D-glucosamine = UDP-N-acetyl-3-O-(1-carboxyvinyl)-alpha-D-glucosamine + phosphate. It participates in cell wall biogenesis; peptidoglycan biosynthesis. Its function is as follows. Cell wall formation. Adds enolpyruvyl to UDP-N-acetylglucosamine. This chain is UDP-N-acetylglucosamine 1-carboxyvinyltransferase, found in Prochlorococcus marinus (strain MIT 9301).